The following is a 60-amino-acid chain: Large ribosomal subunit protein bL32 (60 aa).

Residues Met1–Arg16 are compositionally biased toward basic residues. Positions Met1–Asp20 are disordered.

This sequence belongs to the bacterial ribosomal protein bL32 family.

The sequence is that of Large ribosomal subunit protein bL32 (rpmF) from Chlamydia pneumoniae (Chlamydophila pneumoniae).